The sequence spans 228 residues: L-ribulose-5-phosphate 4-epimerase UlaF (228 aa).

Substrate is bound by residues 26–27 (GN), 43–44 (SG), and 72–73 (SS). Residues aspartate 74, histidine 93, and histidine 95 each coordinate Zn(2+). The active-site Proton donor/acceptor is the aspartate 118. Histidine 167 is a Zn(2+) binding site. Catalysis depends on tyrosine 225, which acts as the Proton donor/acceptor.

The protein belongs to the aldolase class II family. AraD/FucA subfamily. The cofactor is Zn(2+).

It catalyses the reaction L-ribulose 5-phosphate = D-xylulose 5-phosphate. It functions in the pathway cofactor degradation; L-ascorbate degradation; D-xylulose 5-phosphate from L-ascorbate: step 4/4. Catalyzes the isomerization of L-ribulose 5-phosphate to D-xylulose 5-phosphate. Is involved in the anaerobic L-ascorbate utilization. In Shigella boydii serotype 18 (strain CDC 3083-94 / BS512), this protein is L-ribulose-5-phosphate 4-epimerase UlaF.